A 381-amino-acid chain; its full sequence is Succinyl-diaminopimelate desuccinylase (381 aa).

H69 serves as a coordination point for Zn(2+). The active site involves D71. D103 serves as a coordination point for Zn(2+). E137 serves as the catalytic Proton acceptor. Zn(2+)-binding residues include E138, E166, and H355.

This sequence belongs to the peptidase M20A family. DapE subfamily. In terms of assembly, homodimer. Zn(2+) serves as cofactor. Co(2+) is required as a cofactor.

It catalyses the reaction N-succinyl-(2S,6S)-2,6-diaminopimelate + H2O = (2S,6S)-2,6-diaminopimelate + succinate. It participates in amino-acid biosynthesis; L-lysine biosynthesis via DAP pathway; LL-2,6-diaminopimelate from (S)-tetrahydrodipicolinate (succinylase route): step 3/3. In terms of biological role, catalyzes the hydrolysis of N-succinyl-L,L-diaminopimelic acid (SDAP), forming succinate and LL-2,6-diaminopimelate (DAP), an intermediate involved in the bacterial biosynthesis of lysine and meso-diaminopimelic acid, an essential component of bacterial cell walls. This chain is Succinyl-diaminopimelate desuccinylase, found in Rickettsia africae (strain ESF-5).